The following is a 291-amino-acid chain: GTPase Era (291 aa).

The Era-type G domain occupies 2–167 (KSGFVSIIGR…LDEIVKYLDE (166 aa)). Residues 10 to 17 (GRTNAGKS) form a G1 region. 10-17 (GRTNAGKS) provides a ligand contact to GTP. The interval 36 to 40 (NATRR) is G2. Positions 57-60 (DTPG) are G3. GTP-binding positions include 57 to 61 (DTPGL) and 116 to 119 (NKVD). The interval 116–119 (NKVD) is G4. Residues 146 to 148 (YSS) form a G5 region. Residues 186–274 (YRDFILESIY…LLKLFVTVKK (89 aa)) enclose the KH type-2 domain.

Belongs to the TRAFAC class TrmE-Era-EngA-EngB-Septin-like GTPase superfamily. Era GTPase family. Monomer.

It is found in the cytoplasm. It localises to the cell inner membrane. An essential GTPase that binds both GDP and GTP, with rapid nucleotide exchange. Plays a role in 16S rRNA processing and 30S ribosomal subunit biogenesis and possibly also in cell cycle regulation and energy metabolism. The polypeptide is GTPase Era (Campylobacter jejuni subsp. jejuni serotype O:23/36 (strain 81-176)).